A 312-amino-acid polypeptide reads, in one-letter code: Ribonuclease HIII (312 aa).

The RNase H type-2 domain occupies 95 to 311 (FNCIGSDEAG…REKAQKILKP (217 aa)). D101, E102, and D206 together coordinate a divalent metal cation.

The protein belongs to the RNase HII family. RnhC subfamily. Requires Mn(2+) as cofactor. The cofactor is Mg(2+).

It is found in the cytoplasm. The enzyme catalyses Endonucleolytic cleavage to 5'-phosphomonoester.. Its function is as follows. Endonuclease that specifically degrades the RNA of RNA-DNA hybrids. In Staphylococcus aureus (strain Mu3 / ATCC 700698), this protein is Ribonuclease HIII.